The sequence spans 172 residues: NADH-ubiquinone oxidoreductase chain 6 (172 aa).

Helical transmembrane passes span 1 to 21, 27 to 47, 48 to 68, 87 to 107, and 138 to 158; these read MTYF…AVAS, YGVV…LSLG, ISFV…VVFV, VVGY…VGGF, and CGVG…FVVL.

It belongs to the complex I subunit 6 family.

It localises to the mitochondrion membrane. The catalysed reaction is a ubiquinone + NADH + 5 H(+)(in) = a ubiquinol + NAD(+) + 4 H(+)(out). Its function is as follows. Core subunit of the mitochondrial membrane respiratory chain NADH dehydrogenase (Complex I) that is believed to belong to the minimal assembly required for catalysis. Complex I functions in the transfer of electrons from NADH to the respiratory chain. The immediate electron acceptor for the enzyme is believed to be ubiquinone. The polypeptide is NADH-ubiquinone oxidoreductase chain 6 (MT-ND6) (Uria aalge (Common mure)).